The primary structure comprises 162 residues: UPF0260 protein CC_3276 (162 aa).

This sequence belongs to the UPF0260 family.

This chain is UPF0260 protein CC_3276, found in Caulobacter vibrioides (strain ATCC 19089 / CIP 103742 / CB 15) (Caulobacter crescentus).